We begin with the raw amino-acid sequence, 697 residues long: T-related protein (697 aa).

The disordered stretch occupies residues methionine 1–glycine 60. Gly residues-rich tracts occupy residues valine 20–serine 35 and histidine 50–glycine 60. The segment at residues leucine 96–aspartate 264 is a DNA-binding region (T-box). Residues serine 316 to serine 330 are compositionally biased toward low complexity. Disordered stretches follow at residues serine 316–glycine 407 and valine 462–proline 488. A compositionally biased stretch (polar residues) spans serine 337 to tyrosine 351. Composition is skewed to low complexity over residues serine 352–serine 373, glutamine 381–serine 401, and serine 469–proline 488.

The protein resides in the nucleus. Required for the specification of the hindgut and anal pads. This chain is T-related protein (byn), found in Drosophila melanogaster (Fruit fly).